The following is a 269-amino-acid chain: uncharacterized protein (269 aa).

This sequence belongs to the methyltransferase superfamily.

This is an uncharacterized protein from Mycobacterium leprae (strain Br4923).